The following is a 96-amino-acid chain: Co-chaperonin GroES (96 aa).

Belongs to the GroES chaperonin family. Heptamer of 7 subunits arranged in a ring. Interacts with the chaperonin GroEL.

Its subcellular location is the cytoplasm. In terms of biological role, together with the chaperonin GroEL, plays an essential role in assisting protein folding. The GroEL-GroES system forms a nano-cage that allows encapsulation of the non-native substrate proteins and provides a physical environment optimized to promote and accelerate protein folding. GroES binds to the apical surface of the GroEL ring, thereby capping the opening of the GroEL channel. The protein is Co-chaperonin GroES of Buchnera aphidicola subsp. Myzus persicae (Myzus persicae primary endosymbiont).